Here is a 356-residue protein sequence, read N- to C-terminus: S-adenosylmethionine:tRNA ribosyltransferase-isomerase (356 aa).

It belongs to the QueA family. Monomer.

The protein resides in the cytoplasm. The catalysed reaction is 7-aminomethyl-7-carbaguanosine(34) in tRNA + S-adenosyl-L-methionine = epoxyqueuosine(34) in tRNA + adenine + L-methionine + 2 H(+). The protein operates within tRNA modification; tRNA-queuosine biosynthesis. In terms of biological role, transfers and isomerizes the ribose moiety from AdoMet to the 7-aminomethyl group of 7-deazaguanine (preQ1-tRNA) to give epoxyqueuosine (oQ-tRNA). The protein is S-adenosylmethionine:tRNA ribosyltransferase-isomerase of Escherichia coli (strain ATCC 8739 / DSM 1576 / NBRC 3972 / NCIMB 8545 / WDCM 00012 / Crooks).